Reading from the N-terminus, the 687-residue chain is Histone deacetylase clr3 (687 aa).

A histone deacetylase region spans residues 55–385 (KKSGLCYDPR…ALAVAQSLLG (331 aa)). Residue H195 is part of the active site.

Belongs to the histone deacetylase family. HD type 2 subfamily. As to quaternary structure, interacts with ccq1, clr1, clr2 and mit1.

Its subcellular location is the nucleus. The protein resides in the chromosome. It localises to the centromere. The protein localises to the telomere. It carries out the reaction N(6)-acetyl-L-lysyl-[histone] + H2O = L-lysyl-[histone] + acetate. Functionally, responsible for the deacetylation of lysine residues on the N-terminal part of the core histones (H2A, H2B, H3 and H4). Histone deacetylation gives a tag for epigenetic repression and plays an important role in transcriptional regulation, cell cycle progression and developmental events. Histone deacetylases act via the formation of large multiprotein complexes. Required for proper positioning of nucleosomes at heterochromatic loci and for transcriptional gene silencing (TGS) function of the Snf2/Hdac-containing repressor complex (SHREC). This is Histone deacetylase clr3 (clr3) from Schizosaccharomyces pombe (strain 972 / ATCC 24843) (Fission yeast).